A 373-amino-acid chain; its full sequence is MAGKENAAAAQPRLTRAAAKRAAAVTAVAVAAKRKRVALSELPTLSNNNAVVLKPQPAPRGGKRAASHAAEPKKPAPPPAPAVVVVVDDDEEGEGDPQLCAPYASDINSYLRSMEVQAKRRPAADYIETVQVDVTANMRGILVDWLVEVAEEYKLVSDTLYLTVSYIDRFLSAKSINRQKLQLLGVSAMLIASKYEEISPPNVEDFCYITDNTYMKQEVVKMERDILNVLKFEMGNPTTKTFLRMFIRSSQEDDKYPSLPLEFMCSYLAELSLLEYGCVRLLPSVVAASVVFVARLTLDSDTNPWSKKLQEVTGYRASELKDCITCIHDLQLNRKGSSLMAIRDKYKQHRFKGVSTLLPPVEIPASYFEDLNE.

Residues 50 to 80 (AVVLKPQPAPRGGKRAASHAAEPKKPAPPPA) form a disordered region.

The protein belongs to the cyclin family. Cyclin AB subfamily.

The sequence is that of Cyclin-A3-1 (CYCA3-1) from Oryza sativa subsp. japonica (Rice).